A 335-amino-acid chain; its full sequence is Probable G-protein coupled receptor 174 (335 aa).

Over 1–27 (MTDNFTCNKTDGDNTDFRYFIYAVTYT) the chain is Extracellular. 2 N-linked (GlcNAc...) asparagine glycosylation sites follow: Asn-4 and Asn-8. A helical transmembrane segment spans residues 28–48 (VILVPGLIGNILALWVFYGYM). The Cytoplasmic segment spans residues 49–53 (KETKR). The helical transmembrane segment at 54 to 74 (AVVFMINLAIADLLQILSLPL) threads the bilayer. Residues 75-91 (RIFYYLNHDWPFGPGLC) lie on the Extracellular side of the membrane. Cys-91 and Cys-168 are oxidised to a cystine. A helical membrane pass occupies residues 92–112 (MFCFYLKYVNMYASIYFLVCI). Topologically, residues 113 to 134 (SVRRFWFLMYPFRFNDCKQKYD) are cytoplasmic. The helical transmembrane segment at 135–155 (LYISIIGWLIICLACLLFPLL) threads the bilayer. Residues 156–182 (RTNDDTPGNRTKCFVDLPIRNVNLAQS) are Extracellular-facing. Asn-164 is a glycosylation site (N-linked (GlcNAc...) asparagine). Residues 183-203 (VAMITIGEVVGFVTPLMIVLY) traverse the membrane as a helical segment. The Cytoplasmic portion of the chain corresponds to 204-231 (CTWKTALSLQNKYPISQHLGEKKKALKM). Residues 232-252 (ILTCAGVFLVCFVPYHFSFPL) traverse the membrane as a helical segment. Topologically, residues 253-268 (DFLVKSNEIKSCFARR) are extracellular. A helical membrane pass occupies residues 269 to 289 (VILIFHSVALCLASLNSCLDP). The Cytoplasmic portion of the chain corresponds to 290 to 335 (VIYYFTTNEFRRRLSRQDLPDNIQLHTKSYKIASNHATSTVAAELC).

The protein belongs to the G-protein coupled receptor 1 family. Interacts with GNA13. Interacts with CCL21. In terms of tissue distribution, expressed in spleen and, at low levels, in brain. Highly expressed in developing and mature regulatory T-cells.

The protein localises to the cell membrane. Its function is as follows. G-protein-coupled receptor of lysophosphatidylserine (LysoPS) that plays different roles in immune response. Plays a negative role in regulatory T-cell accumulation and homeostasis. Under inflammatory conditions where LysoPS production increases, contributes to the down-regulation of regulatory T-cell activity to favor effector response. Mediates the suppression of IL-2 production in activated T-lymphocytes leading to inhibition of growth, proliferation and differentiation of T-cells. Mechanistically, acts via G(s)-containing heterotrimeric G proteins to trigger elevated cyclic AMP levels and protein kinase A/PKA activity, which may in turn act to antagonize proximal TCR signaling. Plays an important role in the initial period of sepsis through the regulation of macrophage polarization and pro- and anti-inflammatory cytokine secretions. Upon testosterone treatment, acts as a receptor for CCL21 and subsequently triggers through G(q)-alpha and G(12)/G(13) proteins a calcium flux leading to chemotactic effects on activated B-cells. Signals via GNA13 and PKA to promote CD86 up-regulation by follicular B-cells. The protein is Probable G-protein coupled receptor 174 (Gpr174) of Mus musculus (Mouse).